The following is a 374-amino-acid chain: Trehalose-phosphate phosphatase B (374 aa).

The protein belongs to the trehalose phosphatase family. A divalent metal cation is required as a cofactor. In terms of tissue distribution, expressed in flowers.

It carries out the reaction alpha,alpha-trehalose 6-phosphate + H2O = alpha,alpha-trehalose + phosphate. It functions in the pathway glycan biosynthesis; trehalose biosynthesis. Functionally, removes the phosphate from trehalose 6-phosphate to produce free trehalose. Trehalose accumulation in plant may improve abiotic stress tolerance. This Arabidopsis thaliana (Mouse-ear cress) protein is Trehalose-phosphate phosphatase B (TPPB).